Consider the following 181-residue polypeptide: ATP synthase subunit b (181 aa).

The helical transmembrane segment at leucine 12–isoleucine 32 threads the bilayer.

Belongs to the ATPase B chain family. F-type ATPases have 2 components, F(1) - the catalytic core - and F(0) - the membrane proton channel. F(1) has five subunits: alpha(3), beta(3), gamma(1), delta(1), epsilon(1). F(0) has three main subunits: a(1), b(2) and c(10-14). The alpha and beta chains form an alternating ring which encloses part of the gamma chain. F(1) is attached to F(0) by a central stalk formed by the gamma and epsilon chains, while a peripheral stalk is formed by the delta and b chains.

It localises to the cell membrane. Functionally, f(1)F(0) ATP synthase produces ATP from ADP in the presence of a proton or sodium gradient. F-type ATPases consist of two structural domains, F(1) containing the extramembraneous catalytic core and F(0) containing the membrane proton channel, linked together by a central stalk and a peripheral stalk. During catalysis, ATP synthesis in the catalytic domain of F(1) is coupled via a rotary mechanism of the central stalk subunits to proton translocation. Component of the F(0) channel, it forms part of the peripheral stalk, linking F(1) to F(0). This is ATP synthase subunit b from Clavibacter sepedonicus (Clavibacter michiganensis subsp. sepedonicus).